The primary structure comprises 698 residues: Zinc finger CCCH domain-containing protein 7 (698 aa).

Residues 1–11 are compositionally biased toward pro residues; that stretch reads MEEPSPVPPAA. 4 disordered regions span residues 1–23, 56–95, 109–137, and 272–300; these read MEEP…PPTT, HAAR…GGDR, APHE…PQGT, and GSLD…SGNS. Low complexity-rich tracts occupy residues 12–21 and 65–74; these read APASLAAAPP and EPAAAAAIPP. Acidic residues predominate over residues 281-300; the sequence is EEGEIEGDTQNLDADDSGNS. C3H1-type zinc fingers lie at residues 429 to 456, 458 to 485, and 486 to 511; these read PKVV…HDTT, LTKS…HELS, and KYPC…HVIP. Disordered regions lie at residues 512–553 and 607–682; these read TAEG…GEPA and TEKH…QHEV. Composition is skewed to polar residues over residues 535 to 548 and 665 to 680; these read CQEQ…STVY and SLPT…STQH.

The polypeptide is Zinc finger CCCH domain-containing protein 7 (Oryza sativa subsp. japonica (Rice)).